Consider the following 179-residue polypeptide: uncharacterized protein (179 aa).

The Rhodanese domain occupies 21–109 (QQDAVILVDV…WKQAGLPTVK (89 aa)). The next 2 helical transmembrane spans lie at 115-135 (ISIM…GVLL) and 138-158 (FVAP…LFAG).

Its subcellular location is the cell membrane. This is an uncharacterized protein from Synechocystis sp. (strain ATCC 27184 / PCC 6803 / Kazusa).